Here is a 435-residue protein sequence, read N- to C-terminus: Protoheme IX farnesyltransferase, mitochondrial (435 aa).

The N-terminal 35 residues, 1 to 35, are a transit peptide targeting the mitochondrion; it reads MPALCATYLIHSGNLRACLRIVPLTKPSVVIAYRH. The next 6 membrane-spanning stretches (helical) occupy residues 135–155, 157–177, 212–232, 250–270, 324–344, and 401–421; these read VLVM…ATVL, LLSL…INMG, GVIG…LLGA, IINT…GWAA, VALR…YYGI, and FWVS…HKKG.

Belongs to the UbiA prenyltransferase family.

The protein localises to the mitochondrion membrane. Converts protoheme IX and farnesyl diphosphate to heme O. The sequence is that of Protoheme IX farnesyltransferase, mitochondrial (COX10) from Eremothecium gossypii (strain ATCC 10895 / CBS 109.51 / FGSC 9923 / NRRL Y-1056) (Yeast).